Here is a 246-residue protein sequence, read N- to C-terminus: Vacuolar iron transporter 2 (246 aa).

The Cytoplasmic portion of the chain corresponds to methionine 1–aspartate 32. The helical transmembrane segment at isoleucine 33–glycine 53 threads the bilayer. At alanine 54–serine 58 the chain is on the vacuolar side. A helical membrane pass occupies residues alanine 59–glycine 79. Residues glycine 80–alanine 164 lie on the Cytoplasmic side of the membrane. The interval serine 86–leucine 161 is cytoplasmic metal binding domain (MBD). Fe cation is bound by residues glutamate 98, glutamate 101, glutamate 109, glutamate 112, methionine 145, and glutamate 149. Residues glycine 165–valine 185 form a helical membrane-spanning segment. Topologically, residues proline 186–arginine 190 are vacuolar. A helical membrane pass occupies residues alanine 191–glycine 211. The Cytoplasmic segment spans residues arginine 212–proline 218. A helical membrane pass occupies residues phenylalanine 219 to methionine 239. Residues alanine 240–isoleucine 246 lie on the Vacuolar side of the membrane.

It belongs to the CCC1 family. As to quaternary structure, homodimer. The dimeric interaction is mediated by both the transmembrane domains (TMDs) and the cytoplasmic metal binding domain (MBD). As to expression, expressed in leaf sheaths and at lower level in leaf blades.

Its subcellular location is the vacuole membrane. It catalyses the reaction Fe(2+)(in) = Fe(2+)(out). Vacuolar iron transporter involved in the transfer of iron ions from the cytosol to the vacuole for intracellular iron storage. Vacuolar iron storage is required for seed embryo and seedling development. May be involved in the regulation of iron translocation between flag leaves and seeds. Can transport zinc ions from the cytosol to the vacuole. This is Vacuolar iron transporter 2 from Oryza sativa subsp. japonica (Rice).